The following is a 162-amino-acid chain: Epoxidase pydX (162 aa).

The signal sequence occupies residues 1-26; it reads MSLIALPLRLLRLLPAITSTWVLAFA. 2 helical membrane passes run 62–82 and 89–109; these read WILI…LFVG and TGAM…MGYM. Residues Asn127 and Asn139 are each glycosylated (N-linked (GlcNAc...) asparagine).

This sequence belongs to the epoxidase xenD family.

Its subcellular location is the membrane. The protein operates within mycotoxin biosynthesis. Epoxidase; part of the gene cluster that mediates the biosynthesis of pyrrocidines, fungal natural products containing a macrocyclic para-cyclophane connected to a decahydrofluorene ring system that show potent antibiotic activities toward Gram-negative bacteria. Within the pathway, pydX functions synergistically with pydB, pydE and pydZ to form the cyclophane. The pathway begins with the PKS-NRPS pydA which, with the help of the trans-enoyl reductase pydC, synthesizes the polyketide-tyrosyl acyl thioester product which can be reductively off-loaded by the terminal reductase (R) domain in pydA. The alpha/beta hydrolase pydG is then required to catalyze the subsequent Knoevenagel condensation that affords the 3-pyrrolin-2-one ring, whereas the four proteins pydB, pydE, pydX and pydZ then function synergistically to form the cyclophane. PydB and the membrane-bound pydX and pydZ are lipid-binding proteins that can sequester and mold the pdyG product into the inverse S-shape. Binding of the medium chain reductase pydE to the complex would trigger the cascade oxidative cyclization. PydY is involved in the Diels-Alder cycloaddition that forms the decahydrofluorene core. Additional non-enzymatic hydroxylation yields pyrrocidine A2 which can be further reduced into pyrrocidine B by an endogenous reductase. The chain is Epoxidase pydX from Acremonium sp.